Here is a 184-residue protein sequence, read N- to C-terminus: ATP synthase subunit b, chloroplastic (184 aa).

Residues 27 to 49 traverse the membrane as a helical segment; sequence LATNPINLSVVLGVLIFFGKGVL.

It belongs to the ATPase B chain family. As to quaternary structure, F-type ATPases have 2 components, F(1) - the catalytic core - and F(0) - the membrane proton channel. F(1) has five subunits: alpha(3), beta(3), gamma(1), delta(1), epsilon(1). F(0) has four main subunits: a(1), b(1), b'(1) and c(10-14). The alpha and beta chains form an alternating ring which encloses part of the gamma chain. F(1) is attached to F(0) by a central stalk formed by the gamma and epsilon chains, while a peripheral stalk is formed by the delta, b and b' chains.

It localises to the plastid. It is found in the chloroplast thylakoid membrane. Its function is as follows. F(1)F(0) ATP synthase produces ATP from ADP in the presence of a proton or sodium gradient. F-type ATPases consist of two structural domains, F(1) containing the extramembraneous catalytic core and F(0) containing the membrane proton channel, linked together by a central stalk and a peripheral stalk. During catalysis, ATP synthesis in the catalytic domain of F(1) is coupled via a rotary mechanism of the central stalk subunits to proton translocation. Component of the F(0) channel, it forms part of the peripheral stalk, linking F(1) to F(0). This chain is ATP synthase subunit b, chloroplastic, found in Chloranthus spicatus (Chulantree).